A 467-amino-acid polypeptide reads, in one-letter code: Congo red hypersensitive protein 2 (467 aa).

The N-terminal stretch at 1–23 (MAIVNSWLICLVSIFSFVVRVEA) is a signal peptide. An N-linked (GlcNAc...) asparagine glycan is attached at asparagine 28. A disulfide bridge connects residues cysteine 56 and cysteine 67. One can recognise a GH16 domain in the interval 63–280 (SHDSCMPVPI…WSGGEINWDA (218 aa)). Asparagine 96 carries an N-linked (GlcNAc...) asparagine glycan. The active-site Nucleophile is the glutamate 166. Residue glutamate 170 is the Proton donor of the active site. Glutamate 170 is a binding site for chitin. 4 N-linked (GlcNAc...) asparagine glycosylation sites follow: asparagine 190, asparagine 196, asparagine 233, and asparagine 237. Residue tryptophan 257 participates in chitin binding. A glycan (N-linked (GlcNAc...) asparagine) is linked at asparagine 261. Chitin is bound at residue threonine 268. N-linked (GlcNAc...) asparagine glycans are attached at residues asparagine 297 and asparagine 310. Positions 337-444 (MDSDEGSGLD…SSSTSSMSGN (108 aa)) are disordered. A compositionally biased stretch (low complexity) spans 351 to 444 (ATTSSTQKSS…SSSTSSMSGN (94 aa)). Asparagine 445 is lipidated: GPI-anchor amidated asparagine. The propeptide at 446–467 (AGANVAANWRLTVLCVILGYVL) is removed in mature form.

The protein belongs to the glycosyl hydrolase 16 family. CRH1 subfamily. In terms of processing, the GPI-anchor is attached to the protein in the endoplasmic reticulum and serves to target the protein to the cell surface. There, the glucosamine-inositol phospholipid moiety is cleaved off and the GPI-modified mannoprotein is covalently attached via its lipidless GPI glycan remnant to the 1,6-beta-glucan of the outer cell wall layer.

Its subcellular location is the secreted. The protein localises to the cell wall. It is found in the membrane. It carries out the reaction Random endo-hydrolysis of N-acetyl-beta-D-glucosaminide (1-&gt;4)-beta-linkages in chitin and chitodextrins.. Its function is as follows. Dual chitinase/transglycosylase that plays a role in cell wall architecture. Chitinase and transglycosylase activities are coupled. Required for the polysaccharide cross-linking at the septa and the cell wall. More specifically, transfers chitin to both beta(1-3)- and beta(1-6)glucan in the cell wall. The minimal number of intact hexopyranose units required in the molecule of the acceptor oligosaccharide is two and the effectivity of the acceptor increased with the increasing length of its oligosaccharide chain. The sequence is that of Congo red hypersensitive protein 2 from Saccharomyces cerevisiae (strain ATCC 204508 / S288c) (Baker's yeast).